A 449-amino-acid polypeptide reads, in one-letter code: Signal recognition particle protein (449 aa).

Residues 109–116 (GLQGSGKT), 191–195 (DTAGR), and 249–252 (SRID) contribute to the GTP site.

This sequence belongs to the GTP-binding SRP family. SRP54 subfamily. As to quaternary structure, part of the signal recognition particle protein translocation system, which is composed of SRP and FtsY. SRP is a ribonucleoprotein composed of Ffh and a 4.5S RNA molecule.

It localises to the cytoplasm. It carries out the reaction GTP + H2O = GDP + phosphate + H(+). Involved in targeting and insertion of nascent membrane proteins into the cytoplasmic membrane. Binds to the hydrophobic signal sequence of the ribosome-nascent chain (RNC) as it emerges from the ribosomes. The SRP-RNC complex is then targeted to the cytoplasmic membrane where it interacts with the SRP receptor FtsY. Interaction with FtsY leads to the transfer of the RNC complex to the Sec translocase for insertion into the membrane, the hydrolysis of GTP by both Ffh and FtsY, and the dissociation of the SRP-FtsY complex into the individual components. The protein is Signal recognition particle protein of Rickettsia bellii (strain RML369-C).